The chain runs to 212 residues: Phosphoribosylglycinamide formyltransferase (212 aa).

11-13 (GSN) provides a ligand contact to N(1)-(5-phospho-beta-D-ribosyl)glycinamide. Residues Arg-64, 89-92 (MRIL), and Asn-106 each bind (6R)-10-formyltetrahydrofolate. The active-site Proton donor is the His-108. 140 to 144 (TDELD) contacts (6R)-10-formyltetrahydrofolate. 170-173 (QTQE) lines the N(1)-(5-phospho-beta-D-ribosyl)glycinamide pocket.

This sequence belongs to the GART family. In terms of assembly, monomer. Homodimer below pH 6.8.

The enzyme catalyses N(1)-(5-phospho-beta-D-ribosyl)glycinamide + (6R)-10-formyltetrahydrofolate = N(2)-formyl-N(1)-(5-phospho-beta-D-ribosyl)glycinamide + (6S)-5,6,7,8-tetrahydrofolate + H(+). It functions in the pathway purine metabolism; IMP biosynthesis via de novo pathway; N(2)-formyl-N(1)-(5-phospho-D-ribosyl)glycinamide from N(1)-(5-phospho-D-ribosyl)glycinamide (10-formyl THF route): step 1/1. Inhibited by N10-(bromoacetyl)-5,8-dideazafolate. In terms of biological role, catalyzes the transfer of a formyl group from 10-formyltetrahydrofolate to 5-phospho-ribosyl-glycinamide (GAR), producing 5-phospho-ribosyl-N-formylglycinamide (FGAR) and tetrahydrofolate. The chain is Phosphoribosylglycinamide formyltransferase from Escherichia coli (strain K12).